Consider the following 552-residue polypeptide: DNA ligase (552 aa).

Glu-244 contacts ATP. Lys-246 acts as the N6-AMP-lysine intermediate in catalysis. Arg-251, Arg-266, Glu-296, Phe-336, Arg-408, and Lys-414 together coordinate ATP.

The protein belongs to the ATP-dependent DNA ligase family. The cofactor is Mg(2+).

It catalyses the reaction ATP + (deoxyribonucleotide)n-3'-hydroxyl + 5'-phospho-(deoxyribonucleotide)m = (deoxyribonucleotide)n+m + AMP + diphosphate.. DNA ligase that seals nicks in double-stranded DNA during DNA replication, DNA recombination and DNA repair. This chain is DNA ligase, found in Methanothrix thermoacetophila (strain DSM 6194 / JCM 14653 / NBRC 101360 / PT) (Methanosaeta thermophila).